Here is a 219-residue protein sequence, read N- to C-terminus: Thiopurine S-methyltransferase (219 aa).

Residues Trp10, Leu45, Glu66, and Arg130 each coordinate S-adenosyl-L-methionine.

This sequence belongs to the class I-like SAM-binding methyltransferase superfamily. TPMT family.

It is found in the cytoplasm. It catalyses the reaction S-adenosyl-L-methionine + a thiopurine = S-adenosyl-L-homocysteine + a thiopurine S-methylether.. The chain is Thiopurine S-methyltransferase from Psychrobacter cryohalolentis (strain ATCC BAA-1226 / DSM 17306 / VKM B-2378 / K5).